A 348-amino-acid chain; its full sequence is Flagellar P-ring protein (348 aa).

The N-terminal stretch at 1 to 16 is a signal peptide; sequence MRVLTIFLLFMTSIFA.

This sequence belongs to the FlgI family. In terms of assembly, the basal body constitutes a major portion of the flagellar organelle and consists of four rings (L,P,S, and M) mounted on a central rod.

Its subcellular location is the periplasm. The protein resides in the bacterial flagellum basal body. Functionally, assembles around the rod to form the L-ring and probably protects the motor/basal body from shearing forces during rotation. This Campylobacter jejuni subsp. doylei (strain ATCC BAA-1458 / RM4099 / 269.97) protein is Flagellar P-ring protein.